We begin with the raw amino-acid sequence, 373 residues long: RNA 3'-terminal phosphate cyclase-like protein (373 aa).

It belongs to the RNA 3'-terminal cyclase family. Type 2 subfamily. Part of the small subunit (SSU) processome, composed of more than 70 proteins and the RNA chaperone small nucleolar RNA (snoRNA) U3. Interacts with BMS1.

It is found in the nucleus. Its subcellular location is the nucleolus. Its function is as follows. As part of the small subunit (SSU) processome, it plays a role in 40S-ribosomal-subunit biogenesis in the early pre-rRNA processing steps at sites A0, A1 and A2 that are required for proper maturation of the 18S RNA. Activates BMS1 by promoting GDP/GTP exchange. Does not have cyclase activity. This is RNA 3'-terminal phosphate cyclase-like protein (RCL1) from Bos taurus (Bovine).